The chain runs to 89 residues: Protein FAM25A (89 aa).

The protein belongs to the FAM25 family.

In Homo sapiens (Human), this protein is Protein FAM25A.